Reading from the N-terminus, the 335-residue chain is Transaldolase (335 aa).

Serine 2 bears the N-acetylserine mark. Catalysis depends on lysine 144, which acts as the Schiff-base intermediate with substrate.

The protein belongs to the transaldolase family. Type 1 subfamily. Homodimer.

It catalyses the reaction D-sedoheptulose 7-phosphate + D-glyceraldehyde 3-phosphate = D-erythrose 4-phosphate + beta-D-fructose 6-phosphate. It functions in the pathway carbohydrate degradation; pentose phosphate pathway; D-glyceraldehyde 3-phosphate and beta-D-fructose 6-phosphate from D-ribose 5-phosphate and D-xylulose 5-phosphate (non-oxidative stage): step 2/3. Its function is as follows. Transaldolase is important for the balance of metabolites in the pentose-phosphate pathway. The chain is Transaldolase (TAL1) from Saccharomyces cerevisiae (strain ATCC 204508 / S288c) (Baker's yeast).